A 400-amino-acid chain; its full sequence is Phosphoglycerate kinase (400 aa).

Substrate contacts are provided by residues 22–24 (DFN), R38, 61–64 (HLGR), R119, and R152. Residues K205, G296, E327, and 353 to 356 (GGDT) each bind ATP.

This sequence belongs to the phosphoglycerate kinase family. In terms of assembly, monomer.

The protein localises to the cytoplasm. It catalyses the reaction (2R)-3-phosphoglycerate + ATP = (2R)-3-phospho-glyceroyl phosphate + ADP. It functions in the pathway carbohydrate degradation; glycolysis; pyruvate from D-glyceraldehyde 3-phosphate: step 2/5. This is Phosphoglycerate kinase from Campylobacter jejuni subsp. jejuni serotype O:23/36 (strain 81-176).